A 571-amino-acid polypeptide reads, in one-letter code: Folylpolyglutamate synthase (571 aa).

122–125 is a binding site for ATP; it reads GKGS. Residues S146, E215, and H243 each contribute to the Mg(2+) site. Residues R363 and D385 each contribute to the ATP site.

It belongs to the folylpolyglutamate synthase family. It depends on a monovalent cation as a cofactor. In terms of tissue distribution, expressed in both shoots and roots, but expression in roots is higher compared with shoots. Distinct expression in the quiescent center (QC) region of the root tip. Also expressed in vascular tissues of the cotyledons and hypocotyls, and the first true leaves of 7 days old seedlings.

It localises to the plastid. The protein resides in the chloroplast. It catalyses the reaction (6S)-5,6,7,8-tetrahydrofolyl-(gamma-L-Glu)(n) + L-glutamate + ATP = (6S)-5,6,7,8-tetrahydrofolyl-(gamma-L-Glu)(n+1) + ADP + phosphate + H(+). Its pathway is cofactor biosynthesis; tetrahydrofolylpolyglutamate biosynthesis. Its function is as follows. Catalyzes conversion of folates to polyglutamate derivatives allowing concentration of folate compounds in the cell and the intracellular retention of these cofactors, which are important substrates for most of the folate-dependent enzymes that are involved in one-carbon transfer reactions involved in purine, pyrimidine and amino acid synthesis. Essential for organellar and whole-plant folate homeostasis. Required for postembryonic root development. Generates polyglutamylated folate cofactors to support C1 metabolism required for meristem maintenance and cell expansion during postembryonic root development. The polypeptide is Folylpolyglutamate synthase (Arabidopsis thaliana (Mouse-ear cress)).